Reading from the N-terminus, the 564-residue chain is O-fucosyltransferase 6 (564 aa).

The helical; Signal-anchor for type II membrane protein transmembrane segment at 17–37 (LLPFICAVSGALLILFALLSI) threads the bilayer. Asparagine 95 and asparagine 139 each carry an N-linked (GlcNAc...) asparagine glycan. 277-279 (HLR) provides a ligand contact to substrate. N-linked (GlcNAc...) asparagine glycosylation occurs at asparagine 449. Basic and acidic residues predominate over residues 501 to 512 (MDSRKFGKKEQK). The disordered stretch occupies residues 501–542 (MDSRKFGKKEQKEDEDAELSSSETDYEEDQTDLQDRGLYNGT). Acidic residues predominate over residues 513–532 (EDEDAELSSSETDYEEDQTD). N-linked (GlcNAc...) asparagine glycosylation is present at asparagine 540.

This sequence belongs to the glycosyltransferase GT106 family.

Its subcellular location is the membrane. The protein operates within glycan metabolism. This chain is O-fucosyltransferase 6, found in Arabidopsis thaliana (Mouse-ear cress).